The primary structure comprises 468 residues: Mannan endo-1,4-beta-mannosidase 3 (468 aa).

An N-terminal signal peptide occupies residues 1–23 (MTVRPRPAAAAIIIAAVFGAAAA). W86 is a binding site for substrate. An N-linked (GlcNAc...) asparagine glycan is attached at N152. Residue N201 coordinates substrate. The active-site Proton donor is E202. Y281 provides a ligand contact to substrate. N300 carries N-linked (GlcNAc...) asparagine glycosylation. E321 serves as the catalytic Nucleophile. An N-linked (GlcNAc...) asparagine glycan is attached at N333. Substrate-binding residues include W364 and D371. Residues 415 to 436 (LRRRRRRPASSHRKTRLGSGGD) are disordered. Residues 416 to 430 (RRRRRRPASSHRKTR) show a composition bias toward basic residues.

Belongs to the glycosyl hydrolase 5 (cellulase A) family. As to expression, expressed in seeds.

It is found in the secreted. The enzyme catalyses Random hydrolysis of (1-&gt;4)-beta-D-mannosidic linkages in mannans, galactomannans and glucomannans.. This chain is Mannan endo-1,4-beta-mannosidase 3 (MAN3), found in Oryza sativa subsp. japonica (Rice).